The chain runs to 148 residues: Large ribosomal subunit protein uL15 (148 aa).

A disordered region spans residues 1–57; that stretch reads MRLHDLYPFPEERKTRKRVGRGSGSGLGCTSGKGNKGQNARAGGGVRPGFEGGQMPL. Composition is skewed to gly residues over residues 21-35 and 42-52; these read RGSG…GKGN and AGGGVRPGFEG.

Belongs to the universal ribosomal protein uL15 family. Part of the 50S ribosomal subunit.

Functionally, binds to the 23S rRNA. The sequence is that of Large ribosomal subunit protein uL15 from Nitratidesulfovibrio vulgaris (strain ATCC 29579 / DSM 644 / CCUG 34227 / NCIMB 8303 / VKM B-1760 / Hildenborough) (Desulfovibrio vulgaris).